The chain runs to 470 residues: ATP synthase subunit beta (470 aa).

Residue 156–163 (GGAGVGKT) participates in ATP binding.

Belongs to the ATPase alpha/beta chains family. F-type ATPases have 2 components, CF(1) - the catalytic core - and CF(0) - the membrane proton channel. CF(1) has five subunits: alpha(3), beta(3), gamma(1), delta(1), epsilon(1). CF(0) has three main subunits: a(1), b(2) and c(9-12). The alpha and beta chains form an alternating ring which encloses part of the gamma chain. CF(1) is attached to CF(0) by a central stalk formed by the gamma and epsilon chains, while a peripheral stalk is formed by the delta and b chains.

The protein localises to the cell inner membrane. It carries out the reaction ATP + H2O + 4 H(+)(in) = ADP + phosphate + 5 H(+)(out). Its function is as follows. Produces ATP from ADP in the presence of a proton gradient across the membrane. The catalytic sites are hosted primarily by the beta subunits. This chain is ATP synthase subunit beta, found in Nitratidesulfovibrio vulgaris (strain ATCC 29579 / DSM 644 / CCUG 34227 / NCIMB 8303 / VKM B-1760 / Hildenborough) (Desulfovibrio vulgaris).